Consider the following 264-residue polypeptide: tRNA pseudouridine synthase A (264 aa).

The active-site Nucleophile is the aspartate 51. Tyrosine 109 contacts substrate.

This sequence belongs to the tRNA pseudouridine synthase TruA family. In terms of assembly, homodimer.

The catalysed reaction is uridine(38/39/40) in tRNA = pseudouridine(38/39/40) in tRNA. Formation of pseudouridine at positions 38, 39 and 40 in the anticodon stem and loop of transfer RNAs. In Pasteurella multocida (strain Pm70), this protein is tRNA pseudouridine synthase A.